Reading from the N-terminus, the 488-residue chain is Proline--tRNA ligase (488 aa).

The protein belongs to the class-II aminoacyl-tRNA synthetase family. ProS type 3 subfamily. In terms of assembly, homodimer.

Its subcellular location is the cytoplasm. The enzyme catalyses tRNA(Pro) + L-proline + ATP = L-prolyl-tRNA(Pro) + AMP + diphosphate. Catalyzes the attachment of proline to tRNA(Pro) in a two-step reaction: proline is first activated by ATP to form Pro-AMP and then transferred to the acceptor end of tRNA(Pro). This is Proline--tRNA ligase from Pyrobaculum arsenaticum (strain DSM 13514 / JCM 11321 / PZ6).